The primary structure comprises 199 residues: ATP synthase subunit a (199 aa).

5 helical membrane-spanning segments follow: residues 2 to 22 (NQVYFLDIFMFVFVLQFLFYF), 53 to 73 (VISVFTFIILLTCCFGGYFTY), 80 to 100 (MVEFTFVYAAVAWLSTLLTFI), 141 to 161 (LTVNIMVGHLISMMLYQGLEL), and 169 to 189 (WLSIFAIMMECFVFFIQSYIF).

This sequence belongs to the ATPase A chain family. As to quaternary structure, F-type ATPases have 2 components, CF(1) - the catalytic core - and CF(0) - the membrane proton channel. CF(1) has five subunits: alpha(3), beta(3), gamma(1), delta(1), epsilon(1). CF(0) has three main subunits: a, b and c.

Its subcellular location is the mitochondrion inner membrane. Its function is as follows. Mitochondrial membrane ATP synthase (F(1)F(0) ATP synthase or Complex V) produces ATP from ADP in the presence of a proton gradient across the membrane which is generated by electron transport complexes of the respiratory chain. F-type ATPases consist of two structural domains, F(1) - containing the extramembraneous catalytic core and F(0) - containing the membrane proton channel, linked together by a central stalk and a peripheral stalk. During catalysis, ATP synthesis in the catalytic domain of F(1) is coupled via a rotary mechanism of the central stalk subunits to proton translocation. Key component of the proton channel; it may play a direct role in the translocation of protons across the membrane. This is ATP synthase subunit a (atp6) from Caenorhabditis briggsae.